The sequence spans 204 residues: ATP-dependent Clp protease proteolytic subunit 1 (204 aa).

Serine 97 functions as the Nucleophile in the catalytic mechanism. Histidine 122 is a catalytic residue.

This sequence belongs to the peptidase S14 family. In terms of assembly, fourteen ClpP subunits assemble into 2 heptameric rings which stack back to back to give a disk-like structure with a central cavity, resembling the structure of eukaryotic proteasomes.

It localises to the cytoplasm. It carries out the reaction Hydrolysis of proteins to small peptides in the presence of ATP and magnesium. alpha-casein is the usual test substrate. In the absence of ATP, only oligopeptides shorter than five residues are hydrolyzed (such as succinyl-Leu-Tyr-|-NHMec, and Leu-Tyr-Leu-|-Tyr-Trp, in which cleavage of the -Tyr-|-Leu- and -Tyr-|-Trp bonds also occurs).. Cleaves peptides in various proteins in a process that requires ATP hydrolysis. Has a chymotrypsin-like activity. Plays a major role in the degradation of misfolded proteins. The sequence is that of ATP-dependent Clp protease proteolytic subunit 1 from Trichormus variabilis (strain ATCC 29413 / PCC 7937) (Anabaena variabilis).